The chain runs to 84 residues: Large ribosomal subunit protein bL27 (84 aa).

Residues 1–25 (MAHKKGAGSTKNGRDSKPKMLGVKR) form a disordered region.

It belongs to the bacterial ribosomal protein bL27 family.

The chain is Large ribosomal subunit protein bL27 from Dehalococcoides mccartyi (strain ATCC BAA-2266 / KCTC 15142 / 195) (Dehalococcoides ethenogenes (strain 195)).